The following is a 175-amino-acid chain: Large ribosomal subunit protein uL22 (175 aa).

The segment at Val113–Asp175 is disordered. Positions Lys136 to Lys154 are enriched in low complexity. The segment covering Glu166–Asp175 has biased composition (basic and acidic residues).

This sequence belongs to the universal ribosomal protein uL22 family. In terms of assembly, part of the 50S ribosomal subunit.

Its function is as follows. This protein binds specifically to 23S rRNA; its binding is stimulated by other ribosomal proteins, e.g. L4, L17, and L20. It is important during the early stages of 50S assembly. It makes multiple contacts with different domains of the 23S rRNA in the assembled 50S subunit and ribosome. Functionally, the globular domain of the protein is located near the polypeptide exit tunnel on the outside of the subunit, while an extended beta-hairpin is found that lines the wall of the exit tunnel in the center of the 70S ribosome. This Mycobacterium leprae (strain TN) protein is Large ribosomal subunit protein uL22.